Here is a 370-residue protein sequence, read N- to C-terminus: Cysteine synthase 1 (370 aa).

A mitochondrion-targeting transit peptide spans 1 to 16 (MFRQSVRRFATAALRS). N6-(pyridoxal phosphate)lysine is present on Lys73. Residues Asn103, 209-213 (GTGGT), and Ser308 each bind pyridoxal 5'-phosphate.

The protein belongs to the cysteine synthase/cystathionine beta-synthase family. It depends on pyridoxal 5'-phosphate as a cofactor.

It is found in the mitochondrion. It catalyses the reaction O-succinyl-L-serine + hydrogen sulfide = L-cysteine + succinate. It carries out the reaction O-acetyl-L-serine + hydrogen sulfide = L-cysteine + acetate. Its pathway is amino-acid biosynthesis; L-cysteine biosynthesis; L-cysteine from L-serine: step 2/2. In terms of biological role, catalyzes the conversion of O-succinyl-L-serine into cysteine, the last step in the cysteine biosynthesis pathway. Can also use O-acetyl-L-serine. This Emericella nidulans (strain FGSC A4 / ATCC 38163 / CBS 112.46 / NRRL 194 / M139) (Aspergillus nidulans) protein is Cysteine synthase 1.